The sequence spans 1136 residues: Unconventional myosin-Ib (1136 aa).

Residues 15 to 701 (IGVGDMVLLE…TLFKLEDLRK (687 aa)) form the Myosin motor domain. At Ser-60 the chain carries Phosphoserine. 108–115 (GESGAGKT) serves as a coordination point for ATP. Lys-287 is covalently cross-linked (Glycyl lysine isopeptide (Lys-Gly) (interchain with G-Cter in SUMO1); alternate). Residue Lys-287 forms a Glycyl lysine isopeptide (Lys-Gly) (interchain with G-Cter in SUMO2); alternate linkage. The tract at residues 578–600 (VATLMKNLQTKNPNYIRCIKPND) is actin-binding. 6 consecutive IQ domains span residues 704–733 (LEDLATLIQKIYRGWKCRTHFLLMKKSQIV), 728–748 (KKSQIVIAAWYRRYAQQKRYQ), 750–779 (TKSSALVIQSYIRGWKARKILRELKHQKRC), 779–808 (CKEAVTTIAAYWHGTQARRELRRLKEEARN), 808–837 (NKHAIAVIWAYWLGSKARRELKRLKEEARR), and 837–866 (RKHAVAVIWAYWLGLKVRREYRKFFRANAG). The TH1 domain maps to 952-1136 (KALYPSSVGQ…NNRLLEVAVP (185 aa)).

This sequence belongs to the TRAFAC class myosin-kinesin ATPase superfamily. Myosin family.

Motor protein that may participate in process critical to neuronal development and function such as cell migration, neurite outgrowth and vesicular transport. The sequence is that of Unconventional myosin-Ib (MYO1B) from Homo sapiens (Human).